We begin with the raw amino-acid sequence, 416 residues long: Queuine tRNA-ribosyltransferase accessory subunit 2 (416 aa).

4 residues coordinate Zn(2+): Cys323, Cys325, Cys328, and His354.

It belongs to the queuine tRNA-ribosyltransferase family. QTRT2 subfamily. As to quaternary structure, heterodimer of a catalytic subunit and an accessory subunit. Zn(2+) serves as cofactor.

The protein localises to the cytoplasm. Functionally, non-catalytic subunit of the queuine tRNA-ribosyltransferase (TGT) that catalyzes the base-exchange of a guanine (G) residue with queuine (Q) at position 34 (anticodon wobble position) in tRNAs with GU(N) anticodons (tRNA-Asp, -Asn, -His and -Tyr), resulting in the hypermodified nucleoside queuosine (7-(((4,5-cis-dihydroxy-2-cyclopenten-1-yl)amino)methyl)-7-deazaguanosine). The chain is Queuine tRNA-ribosyltransferase accessory subunit 2 from Drosophila mojavensis (Fruit fly).